The chain runs to 393 residues: Na(+)/H(+) antiporter NhaA (393 aa).

Transmembrane regions (helical) follow at residues 23-43 (AGGITLMAAAALALIVANSPF), 58-78 (LSLAHWINDALMAIFFLLVGL), 96-116 (MLPGIAAAGGVILPAIIFAVL), 126-146 (GWAVPSATDIAFALGVLSLLG), 155-175 (VFLATLAILDDLAAVVIIAIF), 178-198 (AEISMPYLGAAFITAAVLFVM), 201-221 (MGVVKLLPYLISAVILWFFVF), 224-244 (GVHATVAGVVAALMIPLKPAP), 265-285 (VAFIVVPIFGFANAGISFKGL), 298-318 (ILLGLFLGKQFGVFGAAWLAI), 334-354 (LYGVAILCGIGFTMSIFIGLL), and 367-387 (IGVLSGSALSAICGYLLLRAA).

The protein belongs to the NhaA Na(+)/H(+) (TC 2.A.33) antiporter family.

Its subcellular location is the cell inner membrane. The catalysed reaction is Na(+)(in) + 2 H(+)(out) = Na(+)(out) + 2 H(+)(in). Functionally, na(+)/H(+) antiporter that extrudes sodium in exchange for external protons. The chain is Na(+)/H(+) antiporter NhaA from Brucella canis (strain ATCC 23365 / NCTC 10854 / RM-666).